We begin with the raw amino-acid sequence, 614 residues long: ATP-dependent zinc metalloprotease FtsH (614 aa).

At methionine 1 to arginine 5 the chain is on the cytoplasmic side. The chain crosses the membrane as a helical span at residues tryptophan 6–glutamine 26. Over threonine 27–serine 127 the chain is Periplasmic. A helical transmembrane segment spans residues isoleucine 128 to valine 148. Residues valine 149 to glycine 614 lie on the Cytoplasmic side of the membrane. Glycine 214–threonine 221 serves as a coordination point for ATP. Residue histidine 436 participates in Zn(2+) binding. Glutamate 437 is an active-site residue. Positions 440 and 513 each coordinate Zn(2+).

This sequence in the central section; belongs to the AAA ATPase family. It in the C-terminal section; belongs to the peptidase M41 family. In terms of assembly, homohexamer. Zn(2+) is required as a cofactor.

The protein resides in the cell inner membrane. Acts as a processive, ATP-dependent zinc metallopeptidase for both cytoplasmic and membrane proteins. Plays a role in the quality control of integral membrane proteins. In Opitutus terrae (strain DSM 11246 / JCM 15787 / PB90-1), this protein is ATP-dependent zinc metalloprotease FtsH.